The primary structure comprises 694 residues: Phosphatase and actin regulator 4 (694 aa).

Disordered stretches follow at residues 1-354 and 375-405; these read MEDP…SPLV and QDIS…PSRL. Positions 45 to 54 are enriched in basic residues; it reads KPWKWRKKKS. A compositionally biased stretch (basic and acidic residues) spans 55–84; that stretch reads SDKFKETSEVLERKISMRKPREELVKRGVL. The stretch at 63-88 is one RPEL 1 repeat; that stretch reads EVLERKISMRKPREELVKRGVLLEDP. A phosphoserine mark is found at S116, S118, S129, and S145. Composition is skewed to low complexity over residues 184-209 and 231-249; these read AGST…TAAT and TLPA…TAPA. A compositionally biased stretch (pro residues) spans 250-259; it reads KQPPIPPPKP. Residues S264, S285, S335, and S337 each carry the phosphoserine modification. Residues 329–352 are compositionally biased toward pro residues; the sequence is LIIPPSSPSPPLPTHIPPEPPRSP. The segment covering 381–392 has biased composition (basic and acidic residues); sequence EDQKTEVPKKIQ. Phosphoserine is present on S420. T425 is modified (phosphothreonine). Phosphoserine occurs at positions 436, 446, 457, 503, 505, 549, and 582. Residues 467-562 are disordered; the sequence is VPDDEEEEQT…TNLNSWPRKS (96 aa). Residues 546–559 show a composition bias toward polar residues; that stretch reads SRPSEPETNLNSWP. 2 RPEL repeats span residues 575 to 600 and 613 to 638; these read NTLI…QPKN and RRLT…RFNE. A disordered region spans residues 589-608; sequence ELEQRNILQPKNEADRQAEK. Residue S620 is modified to Phosphoserine.

Belongs to the phosphatase and actin regulator family. As to quaternary structure, binds PPP1CA and actin.

The protein localises to the cytoplasm. Its subcellular location is the cell projection. It localises to the lamellipodium. Its function is as follows. Regulator of protein phosphatase 1 (PP1) required for neural tube and optic fissure closure, and enteric neural crest cell (ENCCs) migration during development. Acts as an activator of PP1 by interacting with PPP1CA and preventing phosphorylation of PPP1CA at 'Thr-320'. During neural tube closure, localizes to the ventral neural tube and activates PP1, leading to down-regulate cell proliferation within cranial neural tissue and the neural retina. Also acts as a regulator of migration of enteric neural crest cells (ENCCs) by activating PP1, leading to dephosphorylation and subsequent activation of cofilin (COF1 or COF2) and repression of the integrin signaling through the RHO/ROCK pathway. This is Phosphatase and actin regulator 4 (Phactr4) from Mus musculus (Mouse).